A 382-amino-acid chain; its full sequence is Manganese peroxidase H4 (382 aa).

Positions 1–24 (MAFGSLLAFVALAAITRAAPTAES) are cleaved as a signal peptide. 5 disulfide bridges follow: Cys-27/Cys-39, Cys-38/Cys-313, Cys-57/Cys-141, Cys-277/Cys-344, and Cys-366/Cys-373. Positions 59 and 63 each coordinate Mn(2+). The active-site Proton acceptor is His-70. Positions 71, 86, 88, and 90 each coordinate Ca(2+). Residues Asn-100 and Asn-155 are each glycosylated (N-linked (GlcNAc...) asparagine). Residue His-197 coordinates heme b. Ca(2+) is bound at residue Thr-198. Position 203 (Asp-203) interacts with Mn(2+). Residues Asp-215, Thr-217, Thr-220, and Asp-222 each contribute to the Ca(2+) site. An N-linked (GlcNAc...) asparagine glycan is attached at Asn-241.

It belongs to the peroxidase family. Ligninase subfamily. Heme b is required as a cofactor. It depends on Ca(2+) as a cofactor.

It localises to the secreted. It catalyses the reaction 2 Mn(2+) + H2O2 + 2 H(+) = 2 Mn(3+) + 2 H2O. Catalyzes the oxidation of Mn(2+) to Mn(3+). The latter, acting as a diffusible redox mediator, is capable of oxidizing a variety of lignin compounds. The polypeptide is Manganese peroxidase H4 (Phanerodontia chrysosporium (White-rot fungus)).